Consider the following 422-residue polypeptide: Ameloblastin (422 aa).

Residues 1 to 26 (MSASKIPLFKMKGLLLFLSLVKMSLA) form the signal peptide. The residue at position 42 (Pro42) is a Hydroxyproline. Phosphoserine is present on Ser48. O-linked (GalNAc...) serine glycosylation occurs at Ser117. Residues 271–321 (GLNQNSPKGGDFTVEVDSPVSVTKGPEKGEGPEGSPLQEASPDKGENPALL) form a disordered region.

This sequence belongs to the ameloblastin family. Ameloblast-specific.

It localises to the secreted. The protein resides in the extracellular space. Its subcellular location is the extracellular matrix. Functionally, involved in the mineralization and structural organization of enamel. This is Ameloblastin (Ambn) from Rattus norvegicus (Rat).